A 264-amino-acid chain; its full sequence is Undecaprenyl-diphosphatase (264 aa).

The next 8 membrane-spanning stretches (helical) occupy residues Met1 to Ile21, Gln39 to Phe59, Ser83 to Phe103, Ser113 to Lys133, Val143 to Val163, Val181 to Leu201, Leu220 to Ile240, and Ser244 to Val264.

It belongs to the UppP family.

It is found in the cell inner membrane. The catalysed reaction is di-trans,octa-cis-undecaprenyl diphosphate + H2O = di-trans,octa-cis-undecaprenyl phosphate + phosphate + H(+). Catalyzes the dephosphorylation of undecaprenyl diphosphate (UPP). Confers resistance to bacitracin. In Campylobacter curvus (strain 525.92), this protein is Undecaprenyl-diphosphatase.